Consider the following 503-residue polypeptide: Nondiscriminating glutamyl-tRNA synthetase EARS2, mitochondrial (503 aa).

A mitochondrion-targeting transit peptide spans 1-22; the sequence is MKILRGVSRQMCTSRPEVRVRF. Residue 21-23 coordinates L-glutamate; that stretch reads RFA. Residues 26–34 carry the 'HIGH' region motif; that stretch reads PTGFLHLGG. Histidine 31 serves as a coordination point for ATP. Residues glutamate 57, 209 to 213, and arginine 227 contribute to the L-glutamate site; that span reads YHLAS. Residues glutamate 230 and 265 to 269 contribute to the ATP site; that span reads KLSKR. A 'KMSKS' region motif is present at residues 265–269; the sequence is KLSKR.

It belongs to the class-I aminoacyl-tRNA synthetase family. Glutamate--tRNA ligase type 1 subfamily.

The protein resides in the mitochondrion matrix. The enzyme catalyses tRNA(Glx) + L-glutamate + ATP = L-glutamyl-tRNA(Glx) + AMP + diphosphate. It catalyses the reaction tRNA(Glu) + L-glutamate + ATP = L-glutamyl-tRNA(Glu) + AMP + diphosphate. The catalysed reaction is tRNA(Gln) + L-glutamate + ATP = L-glutamyl-tRNA(Gln) + AMP + diphosphate. In terms of biological role, non-discriminating glutamyl-tRNA synthetase that catalyzes aminoacylation of both mitochondrial tRNA(Glu) and tRNA(Gln) and participates in RNA aminoacylation for mitochondrial protein translation. Attachs glutamate to tRNA(Glu) or tRNA(Gln) in a two-step reaction: glutamate is first activated by ATP to form Glu-AMP and then transferred to the acceptor end of tRNA(Glu) or tRNA(Gln). This chain is Nondiscriminating glutamyl-tRNA synthetase EARS2, mitochondrial, found in Danio rerio (Zebrafish).